Reading from the N-terminus, the 105-residue chain is Large ribosomal subunit protein uL24 (105 aa).

This sequence belongs to the universal ribosomal protein uL24 family. In terms of assembly, part of the 50S ribosomal subunit.

One of two assembly initiator proteins, it binds directly to the 5'-end of the 23S rRNA, where it nucleates assembly of the 50S subunit. In terms of biological role, one of the proteins that surrounds the polypeptide exit tunnel on the outside of the subunit. This is Large ribosomal subunit protein uL24 from Pseudothermotoga lettingae (strain ATCC BAA-301 / DSM 14385 / NBRC 107922 / TMO) (Thermotoga lettingae).